A 236-amino-acid polypeptide reads, in one-letter code: Adenosine 5'-phosphosulfate reductase (236 aa).

Residues Cys123, Cys124, Cys206, and Cys209 each coordinate [4Fe-4S] cluster. The active-site Nucleophile; cysteine thiosulfonate intermediate is the Cys232.

It belongs to the PAPS reductase family. CysH subfamily. [4Fe-4S] cluster is required as a cofactor.

It localises to the cytoplasm. The enzyme catalyses [thioredoxin]-disulfide + sulfite + AMP + 2 H(+) = adenosine 5'-phosphosulfate + [thioredoxin]-dithiol. Its pathway is sulfur metabolism; hydrogen sulfide biosynthesis; sulfite from sulfate. Functionally, catalyzes the formation of sulfite from adenosine 5'-phosphosulfate (APS) using thioredoxin as an electron donor. The polypeptide is Adenosine 5'-phosphosulfate reductase (Streptomyces coelicolor (strain ATCC BAA-471 / A3(2) / M145)).